A 116-amino-acid chain; its full sequence is uncharacterized protein (116 aa).

Positions methionine 1–alanine 15 are cleaved as a signal peptide.

This is an uncharacterized protein from Haemophilus influenzae (strain ATCC 51907 / DSM 11121 / KW20 / Rd).